The primary structure comprises 680 residues: Dihydroxyacetone phosphate acyltransferase (680 aa).

A phosphoserine mark is found at serine 12 and serine 17. The HXXXXD motif signature appears at 162 to 167; it reads HRSYID. Lysine 643 carries the post-translational modification N6-acetyllysine. The Microbody targeting signal signature appears at 678 to 680; the sequence is AKL.

It belongs to the GPAT/DAPAT family. Part of a heterotrimeric complex composed of GNPAT, AGPS and a modified form of GNPAT.

It is found in the peroxisome membrane. It catalyses the reaction dihydroxyacetone phosphate + an acyl-CoA = a 1-acylglycerone 3-phosphate + CoA. The catalysed reaction is dihydroxyacetone phosphate + hexadecanoyl-CoA = 1-hexadecanoylglycerone 3-phosphate + CoA. It participates in membrane lipid metabolism; glycerophospholipid metabolism. Dihydroxyacetonephosphate acyltransferase catalyzing the first step in the biosynthesis of plasmalogens, a subset of phospholipids that differ from other glycerolipids by having an alkyl chain attached through a vinyl ether linkage at the sn-1 position of the glycerol backbone, and which unique physical properties have an impact on various aspects of cell signaling and membrane biology. This chain is Dihydroxyacetone phosphate acyltransferase, found in Homo sapiens (Human).